Reading from the N-terminus, the 60-residue chain is Large ribosomal subunit protein uL30 (60 aa).

The protein belongs to the universal ribosomal protein uL30 family. In terms of assembly, part of the 50S ribosomal subunit.

This is Large ribosomal subunit protein uL30 from Pseudoalteromonas translucida (strain TAC 125).